We begin with the raw amino-acid sequence, 237 residues long: Small ribosomal subunit protein eS4 (237 aa).

Positions 37 to 100 (IPLAVLLRDV…NEYYRIIPDP (64 aa)) constitute an S4 RNA-binding domain.

It belongs to the eukaryotic ribosomal protein eS4 family.

In Caldivirga maquilingensis (strain ATCC 700844 / DSM 13496 / JCM 10307 / IC-167), this protein is Small ribosomal subunit protein eS4.